The primary structure comprises 402 residues: UDP-glucose 6-dehydrogenase (402 aa).

NAD(+)-binding positions include 2–19, Val-11, Asp-29, Lys-34, Thr-83, Thr-118, and Glu-145; that span reads KIAVAGSGYVGLSLGVLL. Residues 141 to 145, Lys-204, Asn-208, 249 to 253, and Gly-257 each bind substrate; these read EFLRE and YNNPS. Position 259 (Tyr-259) interacts with NAD(+). Cys-260 acts as the Nucleophile in catalysis. Lys-263 is a binding site for NAD(+). Lys-320 is a substrate binding site. Arg-327 lines the NAD(+) pocket.

Belongs to the UDP-glucose/GDP-mannose dehydrogenase family.

It carries out the reaction UDP-alpha-D-glucose + 2 NAD(+) + H2O = UDP-alpha-D-glucuronate + 2 NADH + 3 H(+). The protein operates within nucleotide-sugar biosynthesis; UDP-alpha-D-glucuronate biosynthesis; UDP-alpha-D-glucuronate from UDP-alpha-D-glucose: step 1/1. Catalyzes the formation of UDP-glucuronic acid which is required for capsular hyaluronic acid synthesis. The chain is UDP-glucose 6-dehydrogenase (hasB) from Streptococcus pyogenes serotype M18 (strain MGAS8232).